The primary structure comprises 645 residues: uncharacterized protein (645 aa).

The protein belongs to the mycobacterial PPE family.

This is an uncharacterized protein from Mycobacterium tuberculosis (strain CDC 1551 / Oshkosh).